A 60-amino-acid chain; its full sequence is Large ribosomal subunit protein bL32 (60 aa).

A disordered region spans residues 1 to 21 (MAVQQNKKSPSKRGMHRAHNA). A compositionally biased stretch (basic residues) spans 9 to 19 (SPSKRGMHRAH).

The protein belongs to the bacterial ribosomal protein bL32 family.

In Albidiferax ferrireducens (strain ATCC BAA-621 / DSM 15236 / T118) (Rhodoferax ferrireducens), this protein is Large ribosomal subunit protein bL32.